A 76-amino-acid polypeptide reads, in one-letter code: Frizzled-3 (76 aa).

The Cytoplasmic segment spans residues 1-5; the sequence is YPERP. The helical transmembrane segment at 6 to 26 threads the bilayer; the sequence is IIFYAVCYMMVSLIFFIGFLL. At 27 to 54 the chain is on the extracellular side; sequence EDRVACNASSPAQYKASTVTQGSHNKAC. The N-linked (GlcNAc...) asparagine glycan is linked to N33. The helical transmembrane segment at 55–75 threads the bilayer; it reads TMLFMVLYFFTMAGSVWWVIL. Residue R76 is a topological domain, cytoplasmic.

It belongs to the G-protein coupled receptor Fz/Smo family.

The protein localises to the membrane. It localises to the cell membrane. The protein resides in the cell surface. It is found in the apical cell membrane. Its function is as follows. Receptor for Wnt proteins. Most of frizzled receptors are coupled to the beta-catenin canonical signaling pathway, which leads to the activation of disheveled proteins, inhibition of GSK-3 kinase, nuclear accumulation of beta-catenin and activation of Wnt target genes. A second signaling pathway involving PKC and calcium fluxes has been seen for some family members, but it is not yet clear if it represents a distinct pathway or if it can be integrated in the canonical pathway, as PKC seems to be required for Wnt-mediated inactivation of GSK-3 kinase. Both pathways seem to involve interactions with G-proteins. May be involved in transduction and intercellular transmission of polarity information during tissue morphogenesis and/or in differentiated tissues. Plays a role in controlling early axon growth and guidance processes necessary for the formation of a subset of central and peripheral major fiber tracts. Involved in the migration of cranial neural crest cells. May also be implicated in the transmission of sensory information from the trunk and limbs to the brain. Controls commissural sensory axons guidance after midline crossing along the anterior-posterior axis in the developing spinal cord in a Wnt-dependent signaling pathway. Together with FZD6, is involved in the neural tube closure and plays a role in the regulation of the establishment of planar cell polarity (PCP). Promotes neurogenesis by maintaining sympathetic neuroblasts within the cell cycle in a beta-catenin-dependent manner. This Gallus gallus (Chicken) protein is Frizzled-3 (FZD3).